Here is a 421-residue protein sequence, read N- to C-terminus: UPF0415 protein C7orf25 homolog (421 aa).

The protein belongs to the UPF0415 family.

The sequence is that of UPF0415 protein C7orf25 homolog from Bos taurus (Bovine).